A 350-amino-acid chain; its full sequence is Anthranilate phosphoribosyltransferase (350 aa).

5-phospho-alpha-D-ribose 1-diphosphate is bound by residues glycine 94, 97-98 (GS), threonine 102, 104-107 (NVST), 122-130 (KHGNRSVSS), and serine 134. An anthranilate-binding site is contributed by glycine 94. Serine 106 contributes to the Mg(2+) binding site. Asparagine 125 is an anthranilate binding site. Residue arginine 180 participates in anthranilate binding. Aspartate 239 and glutamate 240 together coordinate Mg(2+).

Belongs to the anthranilate phosphoribosyltransferase family. Homodimer. It depends on Mg(2+) as a cofactor.

The catalysed reaction is N-(5-phospho-beta-D-ribosyl)anthranilate + diphosphate = 5-phospho-alpha-D-ribose 1-diphosphate + anthranilate. It participates in amino-acid biosynthesis; L-tryptophan biosynthesis; L-tryptophan from chorismate: step 2/5. Catalyzes the transfer of the phosphoribosyl group of 5-phosphorylribose-1-pyrophosphate (PRPP) to anthranilate to yield N-(5'-phosphoribosyl)-anthranilate (PRA). This Geotalea uraniireducens (strain Rf4) (Geobacter uraniireducens) protein is Anthranilate phosphoribosyltransferase.